A 185-amino-acid chain; its full sequence is Ribosome-recycling factor (185 aa).

Belongs to the RRF family.

The protein resides in the cytoplasm. Responsible for the release of ribosomes from messenger RNA at the termination of protein biosynthesis. May increase the efficiency of translation by recycling ribosomes from one round of translation to another. The protein is Ribosome-recycling factor of Streptococcus uberis (strain ATCC BAA-854 / 0140J).